Here is an 85-residue protein sequence, read N- to C-terminus: Coiled-coil-helix-coiled-coil-helix domain-containing protein 7 (85 aa).

The 43-residue stretch at 13–55 (INPCLSESDASTRCLDENNYDRERCSTYFLRYKNCRRFWNSIV) folds into the CHCH domain. 2 short sequence motifs (cx9C motif) span residues 16 to 26 (CLSESDASTRC) and 37 to 47 (CSTYFLRYKNC). Disulfide bonds link Cys16–Cys47 and Cys26–Cys37.

Belongs to the CHCHD7 family. Monomer.

The protein localises to the mitochondrion intermembrane space. The polypeptide is Coiled-coil-helix-coiled-coil-helix domain-containing protein 7 (CHCHD7) (Homo sapiens (Human)).